The sequence spans 109 residues: MFGKGGLGNLMKQAQQMQEKMQQMQEEIAKLEVTGESGAGLVKVTINGAHNCRRVEIDPSLLEDDKEMLEDLVAAAFNDAARRIEETQKEKMASVSSGMQLPPGFKMPF.

The disordered stretch occupies residues 89-109; sequence KEKMASVSSGMQLPPGFKMPF.

This sequence belongs to the YbaB/EbfC family. As to quaternary structure, homodimer.

The protein resides in the cytoplasm. It is found in the nucleoid. In terms of biological role, binds to DNA and alters its conformation. May be involved in regulation of gene expression, nucleoid organization and DNA protection. This Citrobacter koseri (strain ATCC BAA-895 / CDC 4225-83 / SGSC4696) protein is Nucleoid-associated protein CKO_02678.